The primary structure comprises 211 residues: 3-demethoxyubiquinol 3-hydroxylase (211 aa).

The segment at 22–43 is disordered; it reads KHPLNPNRKSPSANTVDGQLSD. Residues 28-42 show a composition bias toward polar residues; it reads NRKSPSANTVDGQLS. 6 residues coordinate Fe cation: glutamate 60, glutamate 90, histidine 93, glutamate 142, glutamate 174, and histidine 177.

Belongs to the COQ7 family. Fe cation serves as cofactor.

Its subcellular location is the cell membrane. It carries out the reaction a 5-methoxy-2-methyl-3-(all-trans-polyprenyl)benzene-1,4-diol + AH2 + O2 = a 3-demethylubiquinol + A + H2O. Its pathway is cofactor biosynthesis; ubiquinone biosynthesis. Catalyzes the hydroxylation of 2-nonaprenyl-3-methyl-6-methoxy-1,4-benzoquinol during ubiquinone biosynthesis. The protein is 3-demethoxyubiquinol 3-hydroxylase of Francisella philomiragia subsp. philomiragia (strain ATCC 25017 / CCUG 19701 / FSC 153 / O#319-036).